A 126-amino-acid polypeptide reads, in one-letter code: Fluoride-specific ion channel FluC (126 aa).

Transmembrane regions (helical) follow at residues 6–26 (FLAV…LAIL), 36–56 (YGTL…VGFF), 69–89 (LVIT…GEVV), and 99–119 (IGVL…MLGF). Na(+)-binding residues include Gly76 and Thr79.

This sequence belongs to the fluoride channel Fluc/FEX (TC 1.A.43) family.

The protein resides in the cell inner membrane. The enzyme catalyses fluoride(in) = fluoride(out). Its activity is regulated as follows. Na(+) is not transported, but it plays an essential structural role and its presence is essential for fluoride channel function. In terms of biological role, fluoride-specific ion channel. Important for reducing fluoride concentration in the cell, thus reducing its toxicity. The chain is Fluoride-specific ion channel FluC from Ralstonia pickettii (strain 12J).